The chain runs to 575 residues: Sulfite reductase [NADPH] hemoprotein beta-component (575 aa).

Positions 439, 445, 484, and 488 each coordinate [4Fe-4S] cluster. Residue Cys488 participates in siroheme binding.

Belongs to the nitrite and sulfite reductase 4Fe-4S domain family. Alpha(8)-beta(8). The alpha component is a flavoprotein, the beta component is a hemoprotein. The cofactor is siroheme. [4Fe-4S] cluster is required as a cofactor.

The catalysed reaction is hydrogen sulfide + 3 NADP(+) + 3 H2O = sulfite + 3 NADPH + 4 H(+). It participates in sulfur metabolism; hydrogen sulfide biosynthesis; hydrogen sulfide from sulfite (NADPH route): step 1/1. Functionally, component of the sulfite reductase complex that catalyzes the 6-electron reduction of sulfite to sulfide. This is one of several activities required for the biosynthesis of L-cysteine from sulfate. The sequence is that of Sulfite reductase [NADPH] hemoprotein beta-component from Blochmanniella pennsylvanica (strain BPEN).